We begin with the raw amino-acid sequence, 328 residues long: Aryl-hydrocarbon-interacting protein-like 1 (328 aa).

The region spanning 53–145 (KQVGHPMHII…DLDELQKEPQ (93 aa)) is the PPIase FKBP-type domain. 3 TPR repeats span residues 178–211 (VPIL…LRNL), 230–263 (NTLI…HPGI), and 264–297 (VKAY…EPSM).

In terms of assembly, directly interacts with NUB1.

It is found in the cytoplasm. The protein localises to the nucleus. Its function is as follows. May be important in protein trafficking and/or protein folding and stabilization. The polypeptide is Aryl-hydrocarbon-interacting protein-like 1 (AIPL1) (Bos taurus (Bovine)).